The sequence spans 464 residues: Sushi repeat-containing protein SRPX (464 aa).

The first 30 residues, 1–30, serve as a signal peptide directing secretion; it reads MGSPAHRPALLLLLPPLLLLLLLRVPPSRS. Residue serine 34 is glycosylated (O-linked (Xyl...) (chondroitin sulfate) serine). 5 disulfides stabilise this stretch: cysteine 57–cysteine 85, cysteine 69–cysteine 103, cysteine 89–cysteine 115, cysteine 120–cysteine 161, and cysteine 147–cysteine 174. Sushi domains lie at 57-117 and 118-176; these read CSPI…ICKQ and KRCP…SCVD. The HYR domain occupies 177 to 259; sequence MEPPRIKCPS…TCKFRVKVRV (83 aa). The Sushi 3 domain occupies 260-319; it reads KRCGKLNAPENGYMKCSSDGDNYGATCEFSCIGGYELQGSPARVCQSNLAWSGTEPTCAA. Disulfide bonds link cysteine 262–cysteine 304 and cysteine 290–cysteine 317.

In terms of tissue distribution, detected in fibroblasts (at protein level). Retina and heart; less in placenta, pancreas, lung, liver, skeletal muscle, kidney and brain.

The protein resides in the cell surface. May be involved in phagocytosis during disk shedding, cell adhesion to cells other than the pigment epithelium or signal transduction. The polypeptide is Sushi repeat-containing protein SRPX (SRPX) (Homo sapiens (Human)).